We begin with the raw amino-acid sequence, 86 residues long: Sulmotoxin 2 (86 aa).

The signal sequence occupies residues 1-21 (MKTLLLALAVVAFMCLDSVYP). 5 disulfides stabilise this stretch: Cys-24/Cys-47, Cys-27/Cys-35, Cys-41/Cys-62, Cys-66/Cys-77, and Cys-78/Cys-83.

This sequence belongs to the three-finger toxin family. Ancestral subfamily. Boigatoxin sub-subfamily. In terms of assembly, monomer. In terms of tissue distribution, expressed by the venom gland.

It is found in the secreted. Probable neurotoxin. Is not toxic to mice and geckos. The chain is Sulmotoxin 2 from Spilotes sulphureus (Amazon puffing snake).